A 577-amino-acid polypeptide reads, in one-letter code: Putative pseudouridine synthase B0024.11 (577 aa).

Asp188 serves as the catalytic Nucleophile. A TRUD domain is found at 265-472 (GFINYFGTQR…GESSRCLFVE (208 aa)). Residues 538–565 (KAMRDASFKTRGDDEKTEENVLEEKGSD) show a composition bias toward basic and acidic residues. The disordered stretch occupies residues 538-577 (KAMRDASFKTRGDDEKTEENVLEEKGSDDANELNLVSEDQ).

This sequence belongs to the pseudouridine synthase TruD family.

It catalyses the reaction a uridine in tRNA = a pseudouridine in tRNA. This Caenorhabditis elegans protein is Putative pseudouridine synthase B0024.11.